An 85-amino-acid chain; its full sequence is Translational regulator CsrA (85 aa).

This sequence belongs to the CsrA/RsmA family. Homodimer; the beta-strands of each monomer intercalate to form a hydrophobic core, while the alpha-helices form wings that extend away from the core.

The protein localises to the cytoplasm. Functionally, a translational regulator that binds mRNA to regulate translation initiation and/or mRNA stability. Usually binds in the 5'-UTR at or near the Shine-Dalgarno sequence preventing ribosome-binding, thus repressing translation. Its main target seems to be the major flagellin gene, while its function is anatagonized by FliW. The polypeptide is Translational regulator CsrA (Leifsonia xyli subsp. xyli (strain CTCB07)).